Reading from the N-terminus, the 407-residue chain is tRNA pseudouridine synthase Pus10 (407 aa).

The active-site Nucleophile is the Asp232. The substrate site is built by Tyr300 and Tyr369.

Belongs to the pseudouridine synthase Pus10 family.

The catalysed reaction is uridine(54) in tRNA = pseudouridine(54) in tRNA. The enzyme catalyses uridine(55) in tRNA = pseudouridine(55) in tRNA. In terms of biological role, responsible for synthesis of pseudouridine from uracil-54 and uracil-55 in the psi GC loop of transfer RNAs. The protein is tRNA pseudouridine synthase Pus10 of Methanosphaera stadtmanae (strain ATCC 43021 / DSM 3091 / JCM 11832 / MCB-3).